Reading from the N-terminus, the 796-residue chain is Protein translocase subunit SecA 2 (796 aa).

ATP contacts are provided by residues glutamine 84, 102 to 106 (GEGKT), and aspartate 496.

This sequence belongs to the SecA family. Monomer and homodimer. Part of the essential Sec protein translocation apparatus which comprises SecA, SecYEG and auxiliary proteins SecDF. Other proteins may also be involved.

The protein localises to the cell membrane. It is found in the cytoplasm. The enzyme catalyses ATP + H2O + cellular proteinSide 1 = ADP + phosphate + cellular proteinSide 2.. In terms of biological role, part of the Sec protein translocase complex. Interacts with the SecYEG preprotein conducting channel. Has a central role in coupling the hydrolysis of ATP to the transfer of proteins into and across the cell membrane, serving as an ATP-driven molecular motor driving the stepwise translocation of polypeptide chains across the membrane. In Staphylococcus aureus (strain MSSA476), this protein is Protein translocase subunit SecA 2.